The chain runs to 121 residues: uncharacterized protein (121 aa).

A run of 3 helical transmembrane segments spans residues 26 to 46 (YACS…AVAT), 57 to 77 (SIPL…SVLI), and 90 to 110 (SFCF…LLCV).

Its subcellular location is the membrane. This is an uncharacterized protein from Saccharomyces cerevisiae (strain ATCC 204508 / S288c) (Baker's yeast).